A 232-amino-acid polypeptide reads, in one-letter code: Lipoprotein-releasing system ATP-binding protein LolD (232 aa).

In terms of domain architecture, ABC transporter spans 11 to 231 (VYLHDIKREY…SLENGHVVEL (221 aa)). 47-54 (APSGSGKS) contacts ATP.

It belongs to the ABC transporter superfamily. Lipoprotein translocase (TC 3.A.1.125) family. As to quaternary structure, the complex is composed of two ATP-binding proteins (LolD) and two transmembrane proteins (LolC and LolE).

Its subcellular location is the cell inner membrane. Its function is as follows. Part of the ABC transporter complex LolCDE involved in the translocation of mature outer membrane-directed lipoproteins, from the inner membrane to the periplasmic chaperone, LolA. Responsible for the formation of the LolA-lipoprotein complex in an ATP-dependent manner. This is Lipoprotein-releasing system ATP-binding protein LolD from Nitrobacter winogradskyi (strain ATCC 25391 / DSM 10237 / CIP 104748 / NCIMB 11846 / Nb-255).